Here is a 99-residue protein sequence, read N- to C-terminus: Putative pterin-4-alpha-carbinolamine dehydratase (99 aa).

It belongs to the pterin-4-alpha-carbinolamine dehydratase family.

It carries out the reaction (4aS,6R)-4a-hydroxy-L-erythro-5,6,7,8-tetrahydrobiopterin = (6R)-L-erythro-6,7-dihydrobiopterin + H2O. This Synechococcus sp. (strain CC9311) protein is Putative pterin-4-alpha-carbinolamine dehydratase.